A 216-amino-acid chain; its full sequence is Cyclic AMP receptor protein (216 aa).

6-126 (LFHGLAPEEV…HNLAALLARR (121 aa)) lines the a nucleoside 3',5'-cyclic phosphate pocket. 3',5'-cyclic AMP contacts are provided by residues 75–78 (GEMS) and 85–86 (RS). An HTH crp-type domain is found at 140-206 (EEARNRVAYA…PGTVEVREAA (67 aa)). A DNA-binding region (H-T-H motif) is located at residues 166 to 185 (HHELAALAGTSRETVSRVLH).

As to quaternary structure, homodimer.

In terms of biological role, activates transcription. Positively regulates six promoters upstream of the TTHB186, TTHB147, TTHB178, TTHB159, TTHA0771 and TTHA0176 genes in a cAMP-dependent manner. Regulated genes include clustered regularly interspaced short palindromic repeat (CRISPR) associated (Cas) genes, and the genes encoding a putative transcriptional regulator, a protein containing the exonuclease III-like domain of DNA polymerase, a GCN5-related acetyltransferase homolog, and some T.thermophilus-specific proteins of unknown function. The consensus DNA-binding site of this transcriptional regulator is 5'-(CT)NNG(G/T)(G/T)C(A/C)N(A/T)NNTCACAN(G/C)(G/C)-3' in which N is G, A, T or C. The sequence is that of Cyclic AMP receptor protein from Thermus thermophilus (strain ATCC 27634 / DSM 579 / HB8).